The primary structure comprises 92 residues: Large ribosomal subunit protein bL27 (92 aa).

The propeptide occupies 1–9; sequence MLVMNLQYF.

It belongs to the bacterial ribosomal protein bL27 family. In terms of processing, the N-terminus is cleaved by ribosomal processing cysteine protease Prp.

The sequence is that of Large ribosomal subunit protein bL27 from Heliobacterium modesticaldum (strain ATCC 51547 / Ice1).